A 440-amino-acid polypeptide reads, in one-letter code: Xylose isomerase (440 aa).

Residues His-100 and Asp-103 contribute to the active site. Positions 231, 267, 270, 295, 306, 308, and 338 each coordinate Mg(2+).

Belongs to the xylose isomerase family. Homotetramer. It depends on Mg(2+) as a cofactor.

It localises to the cytoplasm. The catalysed reaction is alpha-D-xylose = alpha-D-xylulofuranose. The chain is Xylose isomerase from Burkholderia cenocepacia (strain ATCC BAA-245 / DSM 16553 / LMG 16656 / NCTC 13227 / J2315 / CF5610) (Burkholderia cepacia (strain J2315)).